The chain runs to 369 residues: MHGESPIKRRESRKIWVGSVPVGGDAPIAVQSMTNSDTNDVAATVAQINRLEAAGVDIVRISVPDMDAAEAFGRIKQLVKVPLVADIHFDYRIALRVAELGVDCLRINPGNIGREDRVRAVVDAARDRGIPIRIGVNAGSLEKDLQKKYGEPTPEALVESALRHVEHLERLNFKDFKVSVKASDVFMAVAAYRLLAKQIVQPLHLGITEAGGLRSGTVKSAVGLGMLLAEGIGDTIRISLAADPVEEVKVGYDILKSLRLRSRGINFIACPSCSRQNFDVVKTMNELEGRLEDLLVPLDVAVIGCVVNGPGEAKEAHIGLTGGTPNLIYIDGKPAQKLTNDNLVDELERLIREKAAEKTAADASVIVRG.

The [4Fe-4S] cluster site is built by C270, C273, C305, and E312.

The protein belongs to the IspG family. It depends on [4Fe-4S] cluster as a cofactor.

The catalysed reaction is (2E)-4-hydroxy-3-methylbut-2-enyl diphosphate + oxidized [flavodoxin] + H2O + 2 H(+) = 2-C-methyl-D-erythritol 2,4-cyclic diphosphate + reduced [flavodoxin]. Its pathway is isoprenoid biosynthesis; isopentenyl diphosphate biosynthesis via DXP pathway; isopentenyl diphosphate from 1-deoxy-D-xylulose 5-phosphate: step 5/6. In terms of biological role, converts 2C-methyl-D-erythritol 2,4-cyclodiphosphate (ME-2,4cPP) into 1-hydroxy-2-methyl-2-(E)-butenyl 4-diphosphate. The protein is 4-hydroxy-3-methylbut-2-en-1-yl diphosphate synthase (flavodoxin) of Pseudomonas syringae pv. tomato (strain ATCC BAA-871 / DC3000).